A 98-amino-acid polypeptide reads, in one-letter code: Large ribosomal subunit protein uL23 (98 aa).

The protein belongs to the universal ribosomal protein uL23 family. In terms of assembly, part of the 50S ribosomal subunit. Contacts protein L29, and trigger factor when it is bound to the ribosome.

Functionally, one of the early assembly proteins it binds 23S rRNA. One of the proteins that surrounds the polypeptide exit tunnel on the outside of the ribosome. Forms the main docking site for trigger factor binding to the ribosome. The polypeptide is Large ribosomal subunit protein uL23 (Borreliella afzelii (strain PKo) (Borrelia afzelii)).